Reading from the N-terminus, the 106-residue chain is Protein yippee-like At4g27745 (106 aa).

In terms of domain architecture, Yippee spans Arg-8–Asp-105. Zn(2+)-binding residues include Cys-12, Cys-15, Cys-68, and Cys-71.

The protein belongs to the yippee family.

The sequence is that of Protein yippee-like At4g27745 from Arabidopsis thaliana (Mouse-ear cress).